A 476-amino-acid chain; its full sequence is Ribulose bisphosphate carboxylase large chain (476 aa).

The propeptide occupies Met-1–Ser-2. Pro-3 is subject to N-acetylproline. Lys-14 carries the post-translational modification N6,N6,N6-trimethyllysine. Substrate is bound by residues Asn-123 and Thr-173. The Proton acceptor role is filled by Lys-175. Residue Lys-177 coordinates substrate. Mg(2+)-binding residues include Lys-201, Asp-203, and Glu-204. Lys-201 carries the N6-carboxylysine modification. The active-site Proton acceptor is His-294. The substrate site is built by Arg-295, His-327, and Ser-379.

This sequence belongs to the RuBisCO large chain family. Type I subfamily. Heterohexadecamer of 8 large chains and 8 small chains; disulfide-linked. The disulfide link is formed within the large subunit homodimers. It depends on Mg(2+) as a cofactor. In terms of processing, the disulfide bond which can form in the large chain dimeric partners within the hexadecamer appears to be associated with oxidative stress and protein turnover.

It is found in the plastid. Its subcellular location is the chloroplast. The enzyme catalyses 2 (2R)-3-phosphoglycerate + 2 H(+) = D-ribulose 1,5-bisphosphate + CO2 + H2O. It carries out the reaction D-ribulose 1,5-bisphosphate + O2 = 2-phosphoglycolate + (2R)-3-phosphoglycerate + 2 H(+). In terms of biological role, ruBisCO catalyzes two reactions: the carboxylation of D-ribulose 1,5-bisphosphate, the primary event in carbon dioxide fixation, as well as the oxidative fragmentation of the pentose substrate in the photorespiration process. Both reactions occur simultaneously and in competition at the same active site. The sequence is that of Ribulose bisphosphate carboxylase large chain from Brachypodium distachyon (Purple false brome).